Consider the following 695-residue polypeptide: DSC E3 ubiquitin ligase complex subunit 1 (695 aa).

The first 25 residues, 1-25 (MDRRRWVPSTPVVTLLLLFMLFAPA), serve as a signal peptide directing secretion. The Lumenal segment spans residues 26 to 319 (PRLPSRNGES…KGPRNFVLEN (294 aa)). Residues 320 to 340 (HLVRFSSLYIFIVLSQIFVLL) traverse the membrane as a helical segment. At 341-353 (RQMRINSPSHVQR) the chain is on the cytoplasmic side. Residues 354–374 (LSFLTIAMQAGLDAYIAIFFL) traverse the membrane as a helical segment. Residues 375–382 (STNAVIEK) lie on the Lumenal side of the membrane. Residues 383-403 (GYLPFVSVAFLSLVPSVMFTM) traverse the membrane as a helical segment. The Cytoplasmic portion of the chain corresponds to 404–486 (RYLALILRVQ…QRDWSAVCLR (83 aa)). Residues 419-473 (PPAPRPVTNNSSNNNTNQSNASNENSPNAPSAANDNTETTTVNPPQEDDQPMTQH) form a disordered region. The segment covering 427–454 (NNSSNNNTNQSNASNENSPNAPSAANDN) has biased composition (low complexity). The helical transmembrane segment at 487 to 507 (FYFIILVVCIASLYSAFWPVI) threads the bilayer. Over 508–509 (YR) the chain is Lumenal. Residues 510–530 (FYFISALIFTSYSFWIPQIIQ) traverse the membrane as a helical segment. Residues 531-540 (NVKQGTSRSF) lie on the Cytoplasmic side of the membrane. Residues 541-561 (TWTYILGASVLRLYLPLAIFI) traverse the membrane as a helical segment. Residues 562–572 (DSELILGFPPK) lie on the Lumenal side of the membrane. Residues 573-593 (YFFALGLVLWMLFQVLVLLVQ) traverse the membrane as a helical segment. At 594–695 (DTLGPRFFLP…PVCRCHLPAV (102 aa)) the chain is on the cytoplasmic side. The RING-type; atypical zinc finger occupies 634–689 (CPICMQPIELVSTGSTLNPASMMVRRNYMLTPCHHLYHRQCLLQWMETRSICPVCR).

In terms of assembly, component of the DSC E3 ubiquitin ligase complex composed of dsc1, dsc2, dsc3 and dsc4.

The protein resides in the endoplasmic reticulum membrane. Its subcellular location is the golgi apparatus membrane. The catalysed reaction is S-ubiquitinyl-[E2 ubiquitin-conjugating enzyme]-L-cysteine + [acceptor protein]-L-lysine = [E2 ubiquitin-conjugating enzyme]-L-cysteine + N(6)-ubiquitinyl-[acceptor protein]-L-lysine.. It functions in the pathway protein modification; protein ubiquitination. Its function is as follows. Catalytic component of the DSC E3 ubiquitin ligase complex which is required for the sre1 transcriptional activator proteolytic cleavage to release the soluble transcription factor from the membrane in low oxygen or sterol conditions. The complex also plays an important role in the multivesicular body (MVB) pathway and functions in a post-endoplasmic reticulum pathway for protein degradation. The polypeptide is DSC E3 ubiquitin ligase complex subunit 1 (dsc1) (Schizosaccharomyces pombe (strain 972 / ATCC 24843) (Fission yeast)).